Here is a 350-residue protein sequence, read N- to C-terminus: Protein RecA (350 aa).

65–72 (GPESSGKT) contributes to the ATP binding site. The tract at residues 326 to 350 (HNLKTRNTADSKVTGAKDEKSKEEK) is disordered. Positions 340 to 350 (GAKDEKSKEEK) are enriched in basic and acidic residues.

It belongs to the RecA family.

It is found in the cytoplasm. Its function is as follows. Can catalyze the hydrolysis of ATP in the presence of single-stranded DNA, the ATP-dependent uptake of single-stranded DNA by duplex DNA, and the ATP-dependent hybridization of homologous single-stranded DNAs. It interacts with LexA causing its activation and leading to its autocatalytic cleavage. This Clostridium novyi (strain NT) protein is Protein RecA.